We begin with the raw amino-acid sequence, 719 residues long: Pesticidal crystal protein Cry1Id (719 aa).

It belongs to the delta endotoxin family.

Promotes colloidosmotic lysis by binding to the midgut epithelial cells of many lepidopteran larvae. Active on Plutella xylostella and on Bombyx mori. This chain is Pesticidal crystal protein Cry1Id (cry1Id), found in Bacillus thuringiensis.